Consider the following 342-residue polypeptide: Serine/threonine-protein kinase SAPK1 (342 aa).

The region spanning 4–260 is the Protein kinase domain; that stretch reads YEVMRDIGSG…IPEIKNHPWF (257 aa). Residues 10 to 18 and Lys33 each bind ATP; that span reads IGSGNFGVA. The active-site Proton acceptor is Asp123. The interval 253-342 is C-terminal; it reads EIKNHPWFLK…ENSGDFVCAL (90 aa).

It belongs to the protein kinase superfamily. Ser/Thr protein kinase family. In terms of processing, phosphorylated. In terms of tissue distribution, expressed in leaf blades, leaf sheaths and roots. Expressed in shoots and roots of young seedlings.

The enzyme catalyses L-seryl-[protein] + ATP = O-phospho-L-seryl-[protein] + ADP + H(+). It carries out the reaction L-threonyl-[protein] + ATP = O-phospho-L-threonyl-[protein] + ADP + H(+). Its activity is regulated as follows. Activated by phosphorylation in response to hyperosmotic stress within 5 minutes. In terms of biological role, may play a role in signal transduction of hyperosmotic response. This Oryza sativa subsp. japonica (Rice) protein is Serine/threonine-protein kinase SAPK1 (SAPK1).